A 698-amino-acid polypeptide reads, in one-letter code: Potassium-transporting ATPase ATP-binding subunit (698 aa).

The next 4 membrane-spanning stretches (helical) occupy residues 56-76, 82-102, 240-260, and 271-291; these read IMFV…VPSL, LWFN…ANFA, TVLI…PLFT, and ILVA…LSAI. Aspartate 324 (4-aspartylphosphate intermediate) is an active-site residue. ATP is bound by residues aspartate 361, glutamate 365, 393-400, and lysine 412; that span reads FKAETRMS. The Mg(2+) site is built by aspartate 535 and aspartate 539. A run of 3 helical transmembrane segments spans residues 605–625, 633–653, and 677–697; these read FAII…LNIM, AILS…PLAM, and GGVL…GLFI.

Belongs to the cation transport ATPase (P-type) (TC 3.A.3) family. Type IA subfamily. In terms of assembly, the system is composed of three essential subunits: KdpA, KdpB and KdpC.

Its subcellular location is the cell membrane. The enzyme catalyses K(+)(out) + ATP + H2O = K(+)(in) + ADP + phosphate + H(+). Functionally, part of the high-affinity ATP-driven potassium transport (or Kdp) system, which catalyzes the hydrolysis of ATP coupled with the electrogenic transport of potassium into the cytoplasm. This subunit is responsible for energy coupling to the transport system and for the release of the potassium ions to the cytoplasm. The sequence is that of Potassium-transporting ATPase ATP-binding subunit from Bacillus cytotoxicus (strain DSM 22905 / CIP 110041 / 391-98 / NVH 391-98).